We begin with the raw amino-acid sequence, 234 residues long: BTB/POZ domain-containing protein KCTD5 (234 aa).

At alanine 2 the chain carries N-acetylalanine. The BTB domain occupies 44–146 (KWVRLNVGGT…LVKDKIRERD (103 aa)). The segment at 211-234 (NSPHGPASEPSEKAKILQERGSRM) is disordered. A compositionally biased stretch (basic and acidic residues) spans 220–234 (PSEKAKILQERGSRM).

Homopentamer. Interacts (via C-terminus) with GRASP55/GORASP2. Interacts with CUL3 and with ubiquitinated proteins. Interacts with CRY1.

Its subcellular location is the cytoplasm. The protein resides in the cytosol. It localises to the nucleus. Its interaction with CUL3 suggests that it may act as a substrate adapter in some E3 ligase complex. Does not affect the function of Kv channel Kv2.1/KCNB1, Kv1.2/KCNA2, Kv4.2/KCND2 and Kv3.4/KCNC4. The chain is BTB/POZ domain-containing protein KCTD5 (KCTD5) from Bos taurus (Bovine).